Reading from the N-terminus, the 308-residue chain is Aspartate carbamoyltransferase catalytic subunit (308 aa).

The carbamoyl phosphate site is built by Arg51 and Thr52. Lys79 is a binding site for L-aspartate. Carbamoyl phosphate is bound by residues Arg101, His130, and Gln133. The L-aspartate site is built by Arg163 and Arg215. Positions 258 and 259 each coordinate carbamoyl phosphate.

This sequence belongs to the aspartate/ornithine carbamoyltransferase superfamily. ATCase family. As to quaternary structure, heterododecamer (2C3:3R2) of six catalytic PyrB chains organized as two trimers (C3), and six regulatory PyrI chains organized as three dimers (R2).

The catalysed reaction is carbamoyl phosphate + L-aspartate = N-carbamoyl-L-aspartate + phosphate + H(+). It participates in pyrimidine metabolism; UMP biosynthesis via de novo pathway; (S)-dihydroorotate from bicarbonate: step 2/3. Functionally, catalyzes the condensation of carbamoyl phosphate and aspartate to form carbamoyl aspartate and inorganic phosphate, the committed step in the de novo pyrimidine nucleotide biosynthesis pathway. This chain is Aspartate carbamoyltransferase catalytic subunit, found in Pediococcus pentosaceus (strain ATCC 25745 / CCUG 21536 / LMG 10740 / 183-1w).